The sequence spans 265 residues: MGSPSACPYRVCIPWQGLLLTASLLTFWNLPNSAQTNIDVVPFNVAEGKEVLLVVHNESQNLYGYNWYKGERVHANYRIIGYVKNISQENAPGPAHNGRETIYPNGTLLIQNVTHNDAGIYTLHVIKENLVNEEVTRQFYVFSEPPKPSITSNNFNPVENKDIVVLTCQPETQNTTYLWWVNNQSLLVSPRLLLSTDNRTLVLLSATKNDIGPYECEIQNPVGASRSDPVTLNVRYESVQASSPDLSAGTAVSIMIGVLAGMALI.

The N-terminal stretch at M1–Q35 is a signal peptide. The region spanning T36–F142 is the Ig-like V-type domain. N57, N85, N105, N112, N174, N183, and N198 each carry an N-linked (GlcNAc...) asparagine glycan. An Ig-like C2-type domain is found at P146–N233. The cysteines at positions 168 and 216 are disulfide-linked. S242 carries the GPI-anchor amidated serine lipid modification. Positions S243–I265 are cleaved as a propeptide — removed in mature form.

This sequence belongs to the immunoglobulin superfamily. CEA family. In terms of assembly, homodimer. Expressed in columnar epithelial cells of the colon (at protein level). Strongly down-regulated in colonic adenocarcinomas.

It is found in the cell membrane. The protein localises to the apical cell membrane. The sequence is that of Cell adhesion molecule CEACAM7 from Homo sapiens (Human).